The chain runs to 382 residues: Na(+)/H(+) antiporter NhaA 2 (382 aa).

10 helical membrane-spanning segments follow: residues 11 to 31, 45 to 65, 91 to 111, 116 to 136, 145 to 165, 171 to 191, 197 to 214, 287 to 307, 324 to 344, and 353 to 373; these read FSVP…LDPA, LSFH…IAAV, LGGV…VGLP, GWGI…RMVF, YLLL…ALFY, PVVA…WGLG, SYWP…IGLH, WLVL…FGLL, LLVA…VSGS, and AAAK…MLLG.

This sequence belongs to the NhaA Na(+)/H(+) (TC 2.A.33) antiporter family.

The protein resides in the cell inner membrane. The catalysed reaction is Na(+)(in) + 2 H(+)(out) = Na(+)(out) + 2 H(+)(in). Na(+)/H(+) antiporter that extrudes sodium in exchange for external protons. This Pelobacter propionicus (strain DSM 2379 / NBRC 103807 / OttBd1) protein is Na(+)/H(+) antiporter NhaA 2.